Reading from the N-terminus, the 154-residue chain is Ecotin-like protein 2 (154 aa).

The protein belongs to the protease inhibitor I11 (ecotin) family.

This Leishmania braziliensis protein is Ecotin-like protein 2.